The chain runs to 418 residues: Glutamate dehydrogenase (418 aa).

Lys-105 is an active-site residue. 217 to 223 (GYGNVGY) is an NAD(+) binding site.

The protein belongs to the Glu/Leu/Phe/Val dehydrogenases family. Homohexamer.

Its subcellular location is the cytoplasm. It catalyses the reaction L-glutamate + NAD(+) + H2O = 2-oxoglutarate + NH4(+) + NADH + H(+). The catalysed reaction is L-glutamate + NADP(+) + H2O = 2-oxoglutarate + NH4(+) + NADPH + H(+). This is Glutamate dehydrogenase (gdhA) from Aeropyrum pernix (strain ATCC 700893 / DSM 11879 / JCM 9820 / NBRC 100138 / K1).